The chain runs to 465 residues: A-type ATP synthase subunit B (465 aa).

Belongs to the ATPase alpha/beta chains family. As to quaternary structure, has multiple subunits with at least A(3), B(3), C, D, E, F, H, I and proteolipid K(x).

It localises to the cell membrane. Its function is as follows. Component of the A-type ATP synthase that produces ATP from ADP in the presence of a proton gradient across the membrane. The B chain is a regulatory subunit. This chain is A-type ATP synthase subunit B, found in Thermococcus kodakarensis (strain ATCC BAA-918 / JCM 12380 / KOD1) (Pyrococcus kodakaraensis (strain KOD1)).